A 469-amino-acid chain; its full sequence is Argininosuccinate lyase (469 aa).

This sequence belongs to the lyase 1 family. Argininosuccinate lyase subfamily.

The protein localises to the cytoplasm. The enzyme catalyses 2-(N(omega)-L-arginino)succinate = fumarate + L-arginine. The protein operates within amino-acid biosynthesis; L-arginine biosynthesis; L-arginine from L-ornithine and carbamoyl phosphate: step 3/3. In Novosphingobium aromaticivorans (strain ATCC 700278 / DSM 12444 / CCUG 56034 / CIP 105152 / NBRC 16084 / F199), this protein is Argininosuccinate lyase.